Here is a 344-residue protein sequence, read N- to C-terminus: MFTSTGSSGLYKAPLSKSLLLVPSALSLLLALLLPHCQKLFVYDLHAVKNDFQIWRLICGRIICLDLKDTFCSSLLIYNFRIFERRYGSRKFASFLLGSWVLSALFDFLLIEAMQYFFGITAASNLPSGFLAPVFALFVPFYCSIPRVQVAQILGPLSITNKTLIYILGLQLFTSGSYIWIVAISGLMSGLCYDSKMFQVHQVLCIPSWMAKFFSWTLEPIFSSSEPTSEARIGMGATLDIQRQQRMELLDRQLMFSQFAQGRRQRQQQGGMINWNRLFPPLRQRQNVNYQGGRQSEPAAPPLEVSEEQVARLMEMGFSRGDALEALRASNNDLNVATNFLLQH.

The N-terminal stretch at 1-35 (MFTSTGSSGLYKAPLSKSLLLVPSALSLLLALLLP) is a signal peptide. Residues 36–91 (HCQKLFVYDLHAVKNDFQIWRLICGRIICLDLKDTFCSSLLIYNFRIFERRYGSRK) are Extracellular-facing. A helical membrane pass occupies residues 92 to 112 (FASFLLGSWVLSALFDFLLIE). Topologically, residues 113-125 (AMQYFFGITAASN) are cytoplasmic. Residues 126 to 146 (LPSGFLAPVFALFVPFYCSIP) traverse the membrane as a helical segment. Topologically, residues 147 to 163 (RVQVAQILGPLSITNKT) are extracellular. Asn-161 carries N-linked (GlcNAc...) asparagine glycosylation. A helical membrane pass occupies residues 164–184 (LIYILGLQLFTSGSYIWIVAI). Residues 185–344 (SGLMSGLCYD…NVATNFLLQH (160 aa)) are Cytoplasmic-facing. The 41-residue stretch at 304–344 (EVSEEQVARLMEMGFSRGDALEALRASNNDLNVATNFLLQH) folds into the UBA domain.

In terms of assembly, interacts with FAF2. Interacts with LMBR1L. Interacts with AMFR and VCP.

It is found in the endoplasmic reticulum membrane. Restricts trafficking of FAF2 from the endoplasmic reticulum to lipid droplets. In association with LMBR1L and E3 ubiquitin-protein ligase AMFR, negatively regulates the canonical Wnt signaling pathway in the lymphocytes by promoting the ubiquitin-mediated degradation of CTNNB1 and Wnt receptors FZD6 and LRP6. The sequence is that of Ubiquitin-associated domain-containing protein 2 (UBAC2) from Homo sapiens (Human).